Consider the following 234-residue polypeptide: Heme-copper oxidase subunit 2 (234 aa).

2 helical membrane passes run Leu13–Ile33 and Leu72–Leu92. Cu cation is bound by residues His151, Cys188, Cys192, and His196.

It belongs to the cytochrome c oxidase subunit 2 family.

It is found in the cell membrane. In Aeropyrum pernix (strain ATCC 700893 / DSM 11879 / JCM 9820 / NBRC 100138 / K1), this protein is Heme-copper oxidase subunit 2 (aoxA).